We begin with the raw amino-acid sequence, 447 residues long: Oxysterols receptor LXR-alpha (447 aa).

2 disordered regions span residues 1 to 37 and 65 to 88; these read MSLWLGAPVPDIPPDSAVELWKPGAQDASSQAQGGSS and ALLTRAEPPSEPTEIRPQKRKKGP. The segment at 1-96 is transactivation AF-1; required for ligand-independent transactivation function; sequence MSLWLGAPVP…GPAPKMLGNE (96 aa). A compositionally biased stretch (low complexity) spans 24–37; sequence GAQDASSQAQGGSS. The nuclear receptor DNA-binding region spans 95–170; it reads NELCSVCGDK…AGMREECVLS (76 aa). NR C4-type zinc fingers lie at residues 98-118 and 134-158; these read CSVCGDKASGFHYNVLSCEGC and CHSGGHCPMDTYMRRKCQECRLRKC. Residues 180-202 are disordered; the sequence is KRQEEEQAHATSLPPRASSPPQI. A transactivation AF-2; required for ligand-dependent transactivation function; mediates interaction with CCAR2 region spans residues 205-447; that stretch reads QLSPEQLGMI…LLSEIWDVHE (243 aa). The 239-residue stretch at 209 to 447 folds into the NR LBD domain; that stretch reads EQLGMIEKLV…LLSEIWDVHE (239 aa).

This sequence belongs to the nuclear hormone receptor family. NR1 subfamily. As to quaternary structure, heterodimer of NR1H3 and RXR (retinoic acid receptor). Interacts with CCAR2 (via N-terminus) in a ligand-independent manner. Interacts with SIRT1 and this interaction is inhibited by CCAR2. Interacts with GPS2. In terms of processing, ubiquitinated by UBR5, leading to its degradation: UBR5 specifically recognizes and binds ligand-bound NR1H3 when it is not associated with coactivators (NCOAs). In presence of NCOAs, the UBR5-degron is not accessible, preventing its ubiquitination and degradation. In terms of tissue distribution, visceral organs specific expression. Strong expression was found in liver, kidney and intestine followed by spleen and to a lesser extent the adrenals.

Its subcellular location is the nucleus. It is found in the cytoplasm. Functionally, nuclear receptor that exhibits a ligand-dependent transcriptional activation activity. Interaction with retinoic acid receptor (RXR) shifts RXR from its role as a silent DNA-binding partner to an active ligand-binding subunit in mediating retinoid responses through target genes defined by LXRES. LXRES are DR4-type response elements characterized by direct repeats of two similar hexanuclotide half-sites spaced by four nucleotides. Plays an important role in the regulation of cholesterol homeostasis, regulating cholesterol uptake through MYLIP-dependent ubiquitination of LDLR, VLDLR and LRP8. Interplays functionally with RORA for the regulation of genes involved in liver metabolism. Induces LPCAT3-dependent phospholipid remodeling in endoplasmic reticulum (ER) membranes of hepatocytes, driving SREBF1 processing and lipogenesis. Via LPCAT3, triggers the incorporation of arachidonate into phosphatidylcholines of ER membranes, increasing membrane dynamics and enabling triacylglycerols transfer to nascent very low-density lipoprotein (VLDL) particles. Via LPCAT3 also counteracts lipid-induced ER stress response and inflammation, likely by modulating SRC kinase membrane compartmentalization and limiting the synthesis of lipid inflammatory mediators. This is Oxysterols receptor LXR-alpha (NR1H3) from Homo sapiens (Human).